Here is a 305-residue protein sequence, read N- to C-terminus: Glycine--tRNA ligase alpha subunit (305 aa).

It belongs to the class-II aminoacyl-tRNA synthetase family. As to quaternary structure, tetramer of two alpha and two beta subunits.

Its subcellular location is the cytoplasm. It carries out the reaction tRNA(Gly) + glycine + ATP = glycyl-tRNA(Gly) + AMP + diphosphate. This Streptococcus pneumoniae (strain Hungary19A-6) protein is Glycine--tRNA ligase alpha subunit.